We begin with the raw amino-acid sequence, 499 residues long: Sensor histidine kinase VxrA (499 aa).

Residues 1 to 12 (MRYSFCMLEKTN) lie on the Cytoplasmic side of the membrane. Residues 13 to 31 (IPLIRALNLTLVSLCFAML) form a helical membrane-spanning segment. At 32–257 (PNPVHADSLP…ICWDVEDHSD (226 aa)) the chain is on the periplasmic side. Disulfide bonds link Cys-101–Cys-122 and Cys-241–Cys-249. Residues 258–280 (LLRTSMIILVIANIFLVLGWSGY) traverse the membrane as a helical segment. Residues 281-499 (RWNSKRQEMR…IPCETDTASR (219 aa)) lie on the Cytoplasmic side of the membrane. Positions 298–494 (ILTHELRTPI…TFILEIPCET (197 aa)) constitute a Histidine kinase domain. His-301 is subject to Phosphohistidine; by autocatalysis.

Homodimer. Post-translationally, autophosphorylated. Contains two disulfide bonds that may play a role in the stability of the protein. However, the disulfide bonds are not absolutely essential, as some activity and growth are detected in the absence of each disulfide bond.

The protein resides in the cell inner membrane. It carries out the reaction ATP + protein L-histidine = ADP + protein N-phospho-L-histidine.. Member of the two-component regulatory system VxrB/VxrA involved in the regulation of diverses processes, including virulence, the type VI secretion system (T6SS) and biofilm formation. Functions as a sensor protein kinase which is autophosphorylated at a histidine residue and transfers its phosphate group to the conserved aspartic acid residue in the regulatory domain of VxrB. Is critical for colonization in the infant mouse model. Contributes to the resistance to beta-lactam treatment. This Vibrio cholerae serotype O1 (strain ATCC 39315 / El Tor Inaba N16961) protein is Sensor histidine kinase VxrA.